A 437-amino-acid polypeptide reads, in one-letter code: Indole diterpene prenyltransferase anaPT (437 aa).

The tract at residues 1 to 28 (MSPLSMQTDSVQGTAENKSLETNGTSND) is disordered. Residues 102–103 (GF) and Glu111 each bind L-tryptophan. Residues Arg124, Lys208, Tyr210, Tyr282, Gln355, Tyr357, Tyr422, and Tyr426 each contribute to the dimethylallyl diphosphate site.

This sequence belongs to the tryptophan dimethylallyltransferase family.

It carries out the reaction (R)-benzodiazepinedione + dimethylallyl diphosphate = (2R,3S,11R)-aszonalenin + diphosphate. The catalysed reaction is (S)-benzodiazepinedione + dimethylallyl diphosphate = (2R,3S,11S)-aszonalenin + diphosphate. The protein operates within alkaloid biosynthesis. Functionally, indole diterpene prenyltransferase; part of the gene cluster that mediates the biosynthesis of the prenylated pyrroloindoline diketopiperazine acetylaszonalenin. The first step in the pathway is the formation of (R)-benzodiazepinedione by condensation of tryptophan and anthranilic acid catalyzed by the non-ribosomal peptide synthetase anaPS. The prenyltransferase anaPT then converts (R)-benzodiazepinedione to aszonalenin in the presence of dimethylallyl diphosphate (DMAPP) via C3-prenylation. The last step in the biosynthesis of acetylaszonalenin via acetylation of aszonalenin at position N1 catalyzed by anaAT. The chain is Indole diterpene prenyltransferase anaPT from Neosartorya fischeri (strain ATCC 1020 / DSM 3700 / CBS 544.65 / FGSC A1164 / JCM 1740 / NRRL 181 / WB 181) (Aspergillus fischerianus).